Consider the following 920-residue polypeptide: Vacuolar membrane protease (920 aa).

Residues 1–20 (MASSRAQRFNPIAFTPWPVT) are Cytoplasmic-facing. A helical membrane pass occupies residues 21–41 (CITTIVYLALLIPILVINLVV). Topologically, residues 42–378 (PSAPETNPKG…AFAVFRLHTL (337 aa)) are vacuolar. 3 N-linked (GlcNAc...) asparagine glycosylation sites follow: Asn53, Asn116, and Asn119. Residues His175 and Asp187 each contribute to the Zn(2+) site. Glu221 serves as the catalytic Proton acceptor. A Zn(2+)-binding site is contributed by Glu222. The N-linked (GlcNAc...) asparagine glycan is linked to Asn238. Zn(2+) contacts are provided by Glu247 and His306. A helical membrane pass occupies residues 379–399 (FAISVALLVIAPLVIFITSVI). Topologically, residues 400-433 (LSKTDRMYLFSMSKSLEGTGDQVSLRGLRGFSRT) are cytoplasmic. The chain crosses the membrane as a helical span at residues 434 to 454 (PIILVIATTIPICLAYLLEKV). Topologically, residues 455–463 (NPYIVHSSQ) are vacuolar. The helical transmembrane segment at 464-484 (FSVWSMMFSAWIFLAWFLACA) threads the bilayer. Topologically, residues 485–495 (ADFFRPSALHR) are cytoplasmic. A helical transmembrane segment spans residues 496–516 (AYSYTWIFVATWIMLVINTVY). At 517–520 (ANQK) the chain is on the vacuolar side. Residues 521–541 (GIAAGYFLLFYFAGAFLATWI) traverse the membrane as a helical segment. Residues 542 to 659 (SYLELFALPR…TLPRWTWVLQ (118 aa)) lie on the Cytoplasmic side of the membrane. The segment at 556–605 (ARQTTGRRPSSLSSRLLTSSADELRSNASPSTAEFPGAAGEDTDPTESTS) is disordered. The span at 559–575 (TTGRRPSSLSSRLLTSS) shows a compositional bias: low complexity. A helical membrane pass occupies residues 660–680 (LLLLAPIVLILVGQLALFLTA). Residues 681–693 (SMCQVGSDGVSTF) are Vacuolar-facing. A helical membrane pass occupies residues 694-714 (VVYLACAVFTTLLCIPLFPLI). Residues 715–720 (HRFTYH) are Cytoplasmic-facing. A helical membrane pass occupies residues 721–741 (IPTFLFLVFIGTLIYNLVAFP). Topologically, residues 742-920 (FSPANRLKTF…VEASHSFTIQ (179 aa)) are vacuolar. Asn760, Asn788, and Asn832 each carry an N-linked (GlcNAc...) asparagine glycan.

The protein belongs to the peptidase M28 family. Zn(2+) serves as cofactor.

Its subcellular location is the vacuole membrane. May be involved in vacuolar sorting and osmoregulation. This is Vacuolar membrane protease from Ajellomyces capsulatus (strain H143) (Darling's disease fungus).